A 439-amino-acid chain; its full sequence is MKSRVYVRFDRGFHVICPYQAKLAGSRKNDGAGYISPLALKSPIGLQHDLEDGCRIRSAFGKCIVNSRFLALIDVRKSGFKERGSKEPHGNSFVYWVTYSFLQFFETTMDELPSGRGMGGRLPFNQSFWEEFLSGREGQLPTLPDISHVSKSVIRILGGNPGSMHLQGTNTYLVGTGRSRILIDTAQGLPVWIDCISSFLHTQKIELSYVLLTHWHGDHTGGVPDLIAQNSSLADKIYKNHPDSGQNPITHGQIFSVDGATVRAIFTPGHSVDHMCFLLEEENALFTGDNVLGHGFSVAQDLGRYMDSLRDMASLGCRIGYPAHGAVIENLPGKLEEYIQHREGRERMMLSALTRQRVRGEGLREEGVKCGLTLNEIVMAIYGKLPPEVIEKALAPSLLQVLWKLTEDRMVGFKPGDPLKRQWFALEQRKRNKARGYPS.

Residues His214, His216, Asp218, and His219 each coordinate Zn(2+). Asp218 serves as the catalytic Proton donor/acceptor.

Belongs to the metallo-beta-lactamase superfamily. Zn(2+) is required as a cofactor.

Its pathway is secondary metabolite biosynthesis. Its function is as follows. Lactamase-like protein; part of the gene cluster that mediates the biosynthesis of neosartoricin B, a prenylated anthracenone that probably exhibits T-cell antiproliferative activity, suggestive of a physiological role as an immunosuppressive agent. The non-reducing polyketide synthase nscA probably synthesizes and cyclizes the decaketide backbone. The hydrolase nscB then mediates the product release through hydrolysis followed by spontaneous decarboxylation. The prenyltransferase nscD catalyzes the addition of the dimethylallyl group to the aromatic C5. The FAD-dependent monooxygenase nscC is then responsible for the stereospecific hydroxylation at C2. Neosartoricin B can be converted into two additional compounds neosartoricins C and D. Neosartoricin C is a spirocyclic compound that is cyclized through the attack of C3 hydroxyl on C14, followed by dehydration. On the other hand, neosartoricin D is a further cyclized compound in which attack of C2 on C14 in neosartoricin C results in the formation of the acetal-containing dioxabicyclo-octanone ring. Both of these compounds are novel and possibly represent related metabolites of the gene cluster. The protein is Lactamase-like protein nscB of Arthroderma benhamiae (strain ATCC MYA-4681 / CBS 112371) (Trichophyton mentagrophytes).